The primary structure comprises 126 residues: Putative lipoprotein LprD (126 aa).

Positions 1-19 (MSTTRRRRPALVALVTIAA) are cleaved as a signal peptide. Cys20 is lipidated: N-palmitoyl cysteine. A lipid anchor (S-diacylglycerol cysteine) is attached at Cys20. The helical transmembrane segment at 44 to 64 (GYALQWPLFAGFCLYTYHNFV) threads the bilayer.

The protein to M.tuberculosis Rv1343c.

It localises to the cell membrane. The protein is Putative lipoprotein LprD (lprD) of Mycobacterium leprae (strain TN).